The primary structure comprises 231 residues: Somatolactin-2 (231 aa).

The N-terminal stretch at 1-24 (MRMMRAIKQGQWAILLWPYLLTTS) is a signal peptide. 3 disulfides stabilise this stretch: Cys-29-Cys-39, Cys-89-Cys-205, and Cys-222-Cys-230. Asn-145 carries N-linked (GlcNAc...) asparagine glycosylation.

It belongs to the somatotropin/prolactin family. In terms of tissue distribution, pituitary gland.

The protein localises to the secreted. This is Somatolactin-2 from Sparus aurata (Gilthead sea bream).